Here is a 233-residue protein sequence, read N- to C-terminus: Large ribosomal subunit protein uL1 (233 aa).

This sequence belongs to the universal ribosomal protein uL1 family. As to quaternary structure, part of the 50S ribosomal subunit.

Binds directly to 23S rRNA. The L1 stalk is quite mobile in the ribosome, and is involved in E site tRNA release. In terms of biological role, protein L1 is also a translational repressor protein, it controls the translation of the L11 operon by binding to its mRNA. The chain is Large ribosomal subunit protein uL1 from Shewanella baltica (strain OS185).